Here is a 243-residue protein sequence, read N- to C-terminus: Carboxy-S-adenosyl-L-methionine synthase (243 aa).

Residues Tyr39, 64-66 (GCS), 89-90 (DN), 117-118 (DL), Asn132, and Arg199 contribute to the S-adenosyl-L-methionine site.

It belongs to the class I-like SAM-binding methyltransferase superfamily. Cx-SAM synthase family. In terms of assembly, homodimer.

It carries out the reaction prephenate + S-adenosyl-L-methionine = carboxy-S-adenosyl-L-methionine + 3-phenylpyruvate + H2O. In terms of biological role, catalyzes the conversion of S-adenosyl-L-methionine (SAM) to carboxy-S-adenosyl-L-methionine (Cx-SAM). The chain is Carboxy-S-adenosyl-L-methionine synthase from Pseudoalteromonas atlantica (strain T6c / ATCC BAA-1087).